We begin with the raw amino-acid sequence, 281 residues long: Diaminopimelate epimerase (281 aa).

Asn13 and Asn66 together coordinate substrate. Cys75 serves as the catalytic Proton donor. Residues 76 to 77, Asn164, Asn197, and 215 to 216 contribute to the substrate site; these read GN and ER. The active-site Proton acceptor is the Cys224. 225 to 226 contributes to the substrate binding site; it reads GT.

The protein belongs to the diaminopimelate epimerase family. Homodimer.

Its subcellular location is the cytoplasm. It catalyses the reaction (2S,6S)-2,6-diaminopimelate = meso-2,6-diaminopimelate. It functions in the pathway amino-acid biosynthesis; L-lysine biosynthesis via DAP pathway; DL-2,6-diaminopimelate from LL-2,6-diaminopimelate: step 1/1. Catalyzes the stereoinversion of LL-2,6-diaminopimelate (L,L-DAP) to meso-diaminopimelate (meso-DAP), a precursor of L-lysine and an essential component of the bacterial peptidoglycan. This Rippkaea orientalis (strain PCC 8801 / RF-1) (Cyanothece sp. (strain PCC 8801)) protein is Diaminopimelate epimerase.